A 212-amino-acid polypeptide reads, in one-letter code: MGTNKPVVIGIAGGSGSGKTSVTKAIFDHFKGHSILILEQDYYYKDQSHLPMEERLKTNYDHPLAFDNDLLIEHLQQLLAYEQIDKPVYDYTLHTRSEEIIPVEPKDVIILEGILILEDPRLCELMDIKLFVDTDADLRILRRMQRDIKERGRTMDSVIDQYVTVVRPMHNQFIEPSKKFADIIIPEGGQNHVAIDIMVTKIATILEQKVNL.

13-20 contributes to the ATP binding site; the sequence is GGSGSGKT.

This sequence belongs to the uridine kinase family.

The protein localises to the cytoplasm. It catalyses the reaction uridine + ATP = UMP + ADP + H(+). The catalysed reaction is cytidine + ATP = CMP + ADP + H(+). It functions in the pathway pyrimidine metabolism; CTP biosynthesis via salvage pathway; CTP from cytidine: step 1/3. Its pathway is pyrimidine metabolism; UMP biosynthesis via salvage pathway; UMP from uridine: step 1/1. The sequence is that of Uridine kinase from Bacillus cereus (strain G9842).